A 101-amino-acid polypeptide reads, in one-letter code: MVSLLCCGPKLAACGIVISVWGVIMLILLGVFFNVHSAVLIEDVPFTEEDIFEDPNPPAKMYRLYEQVSYNCFIAAAIYIVLGGFSFCQVRLNKRKEYMVR.

The next 2 membrane-spanning stretches (helical) occupy residues 13 to 33 and 68 to 88; these read ACGI…GVFF and VSYN…FSFC.

The protein belongs to the RNase K family.

It localises to the membrane. Its function is as follows. Endoribonuclease which preferentially cleaves ApU and ApG phosphodiester bonds. In Xenopus laevis (African clawed frog), this protein is Ribonuclease kappa-A (rnasek-a).